The following is a 257-amino-acid chain: Gamma-secretase subunit APH-1B (257 aa).

The next 7 helical transmembrane spans lie at 5–25, 32–52, 66–86, 115–135, 160–180, 186–206, and 213–233; these read VFFG…VFTI, VIFL…SSVF, PVQN…QELF, LLAY…SFVN, AFMT…FFDG, WYTL…TFLS, and LVTA…VAGG.

This sequence belongs to the APH-1 family. In terms of assembly, probable component of the gamma-secretase complex, a complex composed of a presenilin homodimer (PSEN1 or PSEN2), nicastrin (NCSTN), APH1 (APH1A or APH1B) and PEN2. Such minimal complex is sufficient for secretase activity, although other components may exist. Interacts with PSEN1 and PSEN2.

It localises to the membrane. Functionally, probable subunit of the gamma-secretase complex, an endoprotease complex that catalyzes the intramembrane cleavage of integral proteins such as Notch receptors and APP (amyloid-beta precursor protein). It probably represents a stabilizing cofactor for the presenilin homodimer that promotes the formation of a stable complex. Probably present in a minority of gamma-secretase complexes compared to APH1A. This Mus musculus (Mouse) protein is Gamma-secretase subunit APH-1B (Aph1b).